The sequence spans 986 residues: Ubiquitin carboxyl-terminal hydrolase 37 (986 aa).

Residues 32–34 carry the KEN box 1 motif; it reads KDN. 2 short sequence motifs (D-box) span residues 71–79 and 96–105; these read CLMLTLKDT and RMYLDAVHQD. Disordered stretches follow at residues 134-238 and 251-305; these read NRQF…MSDP and LKLK…KRSL. Basic and acidic residues predominate over residues 149–159; the sequence is VTVESKDETPF. Residues 160 to 168 carry the D-box 3 motif; sequence RKVLGTPAR. Over residues 171–195 the composition is skewed to polar residues; sequence VKNSSGTGAPSNRVNVAASPTSSVP. Positions 224 to 226 match the KEN box 2 motif; sequence KEN. Over residues 251 to 260 the composition is skewed to basic and acidic residues; that stretch reads LKLKQEEENR. The segment covering 269–298 has biased composition (low complexity); it reads SSSYYGSRSSSKEYSTSSSTLDRSSVSSQT. The 615-residue stretch at 344-958 folds into the USP domain; it reads QGFSNLGNTC…SGYIFFYMHK (615 aa). Residue cysteine 353 is the Nucleophile of the active site. Disordered stretches follow at residues 683–710 and 729–751; these read VQRG…GFDG and SLSL…GDDE. The UIM 1 domain maps to 712-731; it reads SEDELLAAVLEISKREASLS. Residues 729 to 739 show a composition bias toward basic and acidic residues; that stretch reads SLSLSHDEDKP. A KEN box 3 motif is present at residues 789-791; that stretch reads KEN. A disordered region spans residues 811–840; sequence REREEQELQQALAQSLQEQEAREQKEDDDL. UIM domains are found at residues 813 to 832 and 835 to 854; these read REEQ…QEAR and KEDD…FNSS. The span at 818-828 shows a compositional bias: low complexity; sequence LQQALAQSLQE. The segment covering 829–840 has biased composition (basic and acidic residues); that stretch reads QEAREQKEDDDL. Histidine 913 functions as the Proton acceptor in the catalytic mechanism.

It belongs to the peptidase C19 family.

It carries out the reaction Thiol-dependent hydrolysis of ester, thioester, amide, peptide and isopeptide bonds formed by the C-terminal Gly of ubiquitin (a 76-residue protein attached to proteins as an intracellular targeting signal).. Its function is as follows. Deubiquitinase that antagonizes the anaphase-promoting complex (APC/C) during G1/S transition by mediating deubiquitination of APC/C target proteins, thereby promoting S phase entry. Specifically mediates deubiquitination of 'Lys-11'-linked polyubiquitin chains, a specific ubiquitin-linkage type mediated by the APC/C complex. In Gallus gallus (Chicken), this protein is Ubiquitin carboxyl-terminal hydrolase 37 (USP37).